The primary structure comprises 184 residues: Ethylene-responsive transcription factor ERF010 (184 aa).

The segment at residues 20 to 77 (PYKGIRMRKWGKWVAEIREPNKRSRLWLGSYSTPEAAARAYDTAVFYLRGPTARLNFP) is a DNA-binding region (AP2/ERF). Positions 123–184 (QNRDSDVDNK…SSDEEWESKH (62 aa)) are disordered. A compositionally biased stretch (basic and acidic residues) spans 161–172 (LLDRVDLNKLPD). Residues 174–184 (ESSDEEWESKH) are compositionally biased toward acidic residues.

The protein belongs to the AP2/ERF transcription factor family. ERF subfamily.

It localises to the nucleus. In terms of biological role, probably acts as a transcriptional activator. Binds to the GCC-box pathogenesis-related promoter element. May be involved in the regulation of gene expression by stress factors and by components of stress signal transduction pathways. The protein is Ethylene-responsive transcription factor ERF010 (ERF010) of Arabidopsis thaliana (Mouse-ear cress).